A 120-amino-acid chain; its full sequence is Small ribosomal subunit protein bS16 (120 aa).

The tract at residues 84–120 (KRESRNNPQQGQPKKKAQERAAAAAAAAEKAASEAAA) is disordered. Low complexity predominate over residues 103–120 (RAAAAAAAAEKAASEAAA).

The protein belongs to the bacterial ribosomal protein bS16 family.

This Beijerinckia indica subsp. indica (strain ATCC 9039 / DSM 1715 / NCIMB 8712) protein is Small ribosomal subunit protein bS16.